The following is a 63-amino-acid chain: DNA-directed RNA polymerase 7 kDa subunit (63 aa).

This sequence belongs to the poxviridae DNA-directed RNA polymerase 7 kDa subunit family. As to quaternary structure, the DNA-dependent RNA polymerase (vRNAP) consists of eight subunits encoded by early viral genes and termed according to their apparent molecular masses Rpo147, Rpo132, Rpo35, Rpo30, Rpo22, Rpo19, Rpo18, and Rpo7. The same holoenzyme, with the addition of the transcription-specificity factor RAP94, is used for early gene expression.

The protein resides in the virion. It catalyses the reaction RNA(n) + a ribonucleoside 5'-triphosphate = RNA(n+1) + diphosphate. In terms of biological role, part of the DNA-dependent RNA polymerase which catalyzes the transcription of viral DNA into RNA using the four ribonucleoside triphosphates as substrates. Responsible for the transcription of early, intermediate and late genes. DNA-dependent RNA polymerase associates with the early transcription factor (ETF), itself composed of OPG118 and OPG134, thereby allowing the early genes transcription. Late transcription, and probably also intermediate transcription, require newly synthesized RNA polymerase. The sequence is that of DNA-directed RNA polymerase 7 kDa subunit (OPG090) from Homo sapiens (Human).